The primary structure comprises 197 residues: Ribonuclease HII (197 aa).

The RNase H type-2 domain occupies 14-197 (GIIAGVDEVG…RKNFAPIRIL (184 aa)). The a divalent metal cation site is built by aspartate 20, glutamate 21, and aspartate 112.

Belongs to the RNase HII family. Mn(2+) is required as a cofactor. Mg(2+) serves as cofactor.

Its subcellular location is the cytoplasm. It catalyses the reaction Endonucleolytic cleavage to 5'-phosphomonoester.. Its function is as follows. Endonuclease that specifically degrades the RNA of RNA-DNA hybrids. The polypeptide is Ribonuclease HII (Wolbachia pipientis subsp. Culex pipiens (strain wPip)).